A 740-amino-acid chain; its full sequence is Alpha-1,6-mannosylglycoprotein 6-beta-N-acetylglucosaminyltransferase A (740 aa).

The Cytoplasmic segment spans residues 1-13; the sequence is MAFFSPWKLSSQK. The helical; Signal-anchor for type II membrane protein transmembrane segment at 14–30 threads the bilayer; the sequence is LGFFLVTFGFIWGMMLL. The Lumenal segment spans residues 31-740; sequence HFTIQQRTQP…GQVALCKDCL (710 aa). 3 N-linked (GlcNAc...) asparagine glycosylation sites follow: asparagine 109, asparagine 114, and asparagine 117. Cystine bridges form between cysteine 144–cysteine 182, cysteine 155–cysteine 195, cysteine 171–cysteine 337, cysteine 371–cysteine 625, cysteine 648–cysteine 723, cysteine 652–cysteine 725, cysteine 659–cysteine 712, cysteine 680–cysteine 701, and cysteine 736–cysteine 739. A sufficient for catalytic activity region spans residues 212-740; it reads NSLAEIRTDF…GQVALCKDCL (529 aa). A glycan (N-linked (GlcNAc...) asparagine) is linked at asparagine 333. 377-378 is a substrate binding site; the sequence is DS. Residues asparagine 432 and asparagine 446 are each glycosylated (N-linked (GlcNAc...) asparagine). UDP-N-acetyl-alpha-D-glucosamine is bound at residue glutamate 525. Lysine 553 is a binding site for substrate.

Belongs to the glycosyltransferase 18 family. Post-translationally, N-glycosylated. In terms of processing, a secreted form is released from the membrane after cleavage by gamma-secretase. As to expression, detected in kidney (at protein level). Detected in kidney.

The protein localises to the golgi apparatus membrane. Its subcellular location is the secreted. The enzyme catalyses N(4)-{beta-D-GlcNAc-(1-&gt;2)-[beta-D-GlcNAc-(1-&gt;4)]-alpha-D-Man-(1-&gt;3)-[beta-D-GlcNAc-(1-&gt;2)-alpha-D-Man-(1-&gt;6)]-beta-D-Man-(1-&gt;4)-beta-D-GlcNAc-(1-&gt;4)-beta-D-GlcNAc}-L-asparaginyl-[protein] + UDP-N-acetyl-alpha-D-glucosamine = N(4)-{beta-D-GlcNAc-(1-&gt;2)-[beta-D-GlcNAc-(1-&gt;4)]-alpha-D-Man-(1-&gt;3)-[beta-D-GlcNAc-(1-&gt;2)-[beta-D-GlcNAc-(1-&gt;6)]-alpha-D-Man-(1-&gt;6)]-beta-D-Man-(1-&gt;4)-beta-D-GlcNAc-(1-&gt;4)-beta-D-GlcNAc}-L-asparaginyl-[protein] + UDP + H(+). Its pathway is protein modification; protein glycosylation. Catalyzes the addition of N-acetylglucosamine (GlcNAc) in beta 1-6 linkage to the alpha-linked mannose of biantennary N-linked oligosaccharides. Catalyzes an important step in the biosynthesis of branched, complex-type N-glycans, such as those found on EGFR, TGFR (TGF-beta receptor) and CDH2. Via its role in the biosynthesis of complex N-glycans, plays an important role in the activation of cellular signaling pathways, reorganization of the actin cytoskeleton, cell-cell adhesion and cell migration. MGAT5-dependent EGFR N-glycosylation enhances the interaction between EGFR and LGALS3 and thereby prevents rapid EGFR endocytosis and prolongs EGFR signaling. Required for efficient interaction between TGFB1 and its receptor. Enhances activation of intracellular signaling pathways by several types of growth factors, including FGF2, PDGF, IGF, TGFB1 and EGF. MGAT5-dependent CDH2 N-glycosylation inhibits CDH2-mediated homotypic cell-cell adhesion and contributes to the regulation of downstream signaling pathways. Promotes cell migration. Contributes to the regulation of the inflammatory response. MGAT5-dependent TCR N-glycosylation enhances the interaction between TCR and LGALS3, limits agonist-induced TCR clustering, and thereby dampens TCR-mediated responses to antigens. Required for normal leukocyte evasation and accumulation at sites of inflammation. Inhibits attachment of monocytes to the vascular endothelium and subsequent monocyte diapedesis. Its function is as follows. Promotes proliferation of umbilical vein endothelial cells and angiogenesis, at least in part by promoting the release of the growth factor FGF2 from the extracellular matrix. This Rattus norvegicus (Rat) protein is Alpha-1,6-mannosylglycoprotein 6-beta-N-acetylglucosaminyltransferase A (Mgat5).